The sequence spans 139 residues: Putative pre-16S rRNA nuclease (139 aa).

Belongs to the YqgF nuclease family.

The protein localises to the cytoplasm. Functionally, could be a nuclease involved in processing of the 5'-end of pre-16S rRNA. The sequence is that of Putative pre-16S rRNA nuclease from Haemophilus influenzae (strain PittEE).